The chain runs to 279 residues: Acyl-coenzyme A thioesterase MBLAC2 (279 aa).

Serine 2 is modified (N-acetylserine). Positions 83, 85, 87, 88, 170, 189, and 231 each coordinate Zn(2+). Cysteine 254 carries the S-palmitoyl cysteine lipid modification.

The protein belongs to the metallo-beta-lactamase superfamily. Glyoxalase II family. Zn(2+) serves as cofactor. Palmitoylated on Cys-254 by ZDHHC20.

It is found in the endoplasmic reticulum membrane. The protein resides in the cell membrane. The catalysed reaction is hexadecanoyl-CoA + H2O = hexadecanoate + CoA + H(+). The enzyme catalyses dodecanoyl-CoA + H2O = dodecanoate + CoA + H(+). It catalyses the reaction tetradecanoyl-CoA + H2O = tetradecanoate + CoA + H(+). It carries out the reaction octadecanoyl-CoA + H2O = octadecanoate + CoA + H(+). The catalysed reaction is a beta-lactam + H2O = a substituted beta-amino acid. Beta-lactamase activity is inhibited by sulbactam. Acyl-CoA thioesterases are a group of enzymes that catalyze the hydrolysis of acyl-CoAs to the free fatty acid and coenzyme A (CoASH), providing the potential to regulate intracellular levels of acyl-CoAs, free fatty acids and CoASH. Has an acyl-CoA thioesterase activity towards the long chain fatty acyl-CoA thioester palmitoyl-CoA (hexadecanoyl-CoA; C16:0-CoA). Displays a substrate preference for fatty acyl-CoAs with chain-lengths C12-C18. Possesses beta-lactamase activity, catalyzing the hydrolysis of penicillin G and nitrocefin. Exhibits no activity towards other beta-lactam antibiotic classes including cephalosporins (cefotaxime) and carbapenems (imipenem). The protein is Acyl-coenzyme A thioesterase MBLAC2 (MBLAC2) of Homo sapiens (Human).